A 163-amino-acid chain; its full sequence is Allophycocyanin alpha-B chain (163 aa).

Asn-71 is subject to N4-methylasparagine. Cys-81 contributes to the (2R,3E)-phycocyanobilin binding site.

This sequence belongs to the phycobiliprotein family. Contains one covalently linked bilin chromophore.

It is found in the plastid. Its subcellular location is the chloroplast thylakoid membrane. In terms of biological role, allophycocyanin is a photosynthetic bile pigment-protein complex with maximum absorption at approximately 650 nanometers. This Cyanidium caldarium (Red alga) protein is Allophycocyanin alpha-B chain (apcD).